A 540-amino-acid polypeptide reads, in one-letter code: Chaperonin GroEL 2 (540 aa).

ATP-binding positions include 30 to 33 (TLGP), Lys51, 87 to 91 (DGTTT), Gly415, 479 to 481 (NAA), and Asp495.

The protein belongs to the chaperonin (HSP60) family. As to quaternary structure, forms a cylinder of 14 subunits composed of two heptameric rings stacked back-to-back. Interacts with the co-chaperonin GroES.

The protein localises to the cytoplasm. The enzyme catalyses ATP + H2O + a folded polypeptide = ADP + phosphate + an unfolded polypeptide.. Its function is as follows. Together with its co-chaperonin GroES, plays an essential role in assisting protein folding. The GroEL-GroES system forms a nano-cage that allows encapsulation of the non-native substrate proteins and provides a physical environment optimized to promote and accelerate protein folding. The protein is Chaperonin GroEL 2 of Burkholderia vietnamiensis (strain G4 / LMG 22486) (Burkholderia cepacia (strain R1808)).